Consider the following 357-residue polypeptide: Probable RNA methyltransferase Daro_1157 (357 aa).

E91 serves as the catalytic Proton acceptor. In terms of domain architecture, Radical SAM core spans 94–320 (LLPRDGLCIS…TTVRNSAGQD (227 aa)). C101 and C325 form a disulfide bridge. 3 residues coordinate [4Fe-4S] cluster: C108, C112, and C115. S-adenosyl-L-methionine-binding positions include 153–154 (GE), S183, 206–208 (SLH), and N282. The active-site S-methylcysteine intermediate is the C325.

The protein belongs to the radical SAM superfamily. RlmN family. Requires [4Fe-4S] cluster as cofactor.

The protein localises to the cytoplasm. In Dechloromonas aromatica (strain RCB), this protein is Probable RNA methyltransferase Daro_1157.